The sequence spans 546 residues: Chaperonin GroEL (546 aa).

Residues 29–32 (TLGP), K50, 86–90 (DGTTT), G414, and D495 each bind ATP. The interval 526 to 546 (AKEGAPAGGGMPDMGGMGGMM) is disordered. A compositionally biased stretch (gly residues) spans 531 to 546 (PAGGGMPDMGGMGGMM).

It belongs to the chaperonin (HSP60) family. As to quaternary structure, forms a cylinder of 14 subunits composed of two heptameric rings stacked back-to-back. Interacts with the co-chaperonin GroES.

The protein localises to the cytoplasm. The enzyme catalyses ATP + H2O + a folded polypeptide = ADP + phosphate + an unfolded polypeptide.. Functionally, together with its co-chaperonin GroES, plays an essential role in assisting protein folding. The GroEL-GroES system forms a nano-cage that allows encapsulation of the non-native substrate proteins and provides a physical environment optimized to promote and accelerate protein folding. The polypeptide is Chaperonin GroEL (Jannaschia sp. (strain CCS1)).